The primary structure comprises 411 residues: Inhibin beta B chain (411 aa).

An N-terminal signal peptide occupies residues 1–28; the sequence is MDGLPGRALGAACLLLLAAGWLGPEAWG. Residues 27-69 are disordered; sequence WGSPTPPPSPAAPPPPPPPGAPGGSQDTCTSCGGGGGGFRRPE. The propeptide occupies 29–296; the sequence is SPTPPPSPAA…GDSRHRIRKR (268 aa). A compositionally biased stretch (pro residues) spans 30-47; that stretch reads PTPPPSPAAPPPPPPPGA. Asn97 carries N-linked (GlcNAc...) asparagine glycosylation. 4 cysteine pairs are disulfide-bonded: Cys300–Cys308, Cys307–Cys376, Cys336–Cys408, and Cys340–Cys410.

Belongs to the TGF-beta family. In terms of assembly, dimeric, linked by one or more disulfide bonds. Inhibin B is a dimer of alpha and beta-B. Activin B is a homodimer of beta-B. Activin AB is a dimer of beta-A and beta-B. Interacts with FST and FSTL3. Alpha- and beta-B subunits are the predominant forms found in rat testis. Also expressed in ovary.

Its subcellular location is the secreted. Inhibins and activins inhibit and activate, respectively, the secretion of follitropin by the pituitary gland. Inhibins/activins are involved in regulating a number of diverse functions such as hypothalamic and pituitary hormone secretion, gonadal hormone secretion, germ cell development and maturation, erythroid differentiation, insulin secretion, nerve cell survival, embryonic axial development or bone growth, depending on their subunit composition. Inhibins appear to oppose the functions of activins. In terms of biological role, activin B is a dimer of alpha and beta-B that plays a role in several essential biological processes including embryonic development, stem cell maintenance and differentiation, haematopoiesis, cell proliferation and wound healing. Signals through type I receptor ACVR1C, abundantly expressed in pancreatic beta cells, and type II receptors like ACVR2A. Upon ligand binding, these receptors phosphorylate intracellular signaling mediators SMAD2 and SMAD3, which form a complex with SMAD4, translocate to the nucleus, and regulate gene expression. Plays a crucial role in the induction of hepcidin by inflammation through activation of ACVR1C and subsequent phosphorylation of SMAD1/5/8. Regulates adipocyte lipid metabolism by decreasing non-esterified fatty acids and glycerol release and increases intracellular triglyceride content. Stimulates wound healing by promoting cell migration and hair follicle regeneration through the JNK and ERK signaling pathways downstream of RHOA. Its function is as follows. Inhibin B is a dimer of alpha and beta-B that plays a crucial role in the regulation of the reproductive system by inhibiting the secretion of follicle-stimulating hormone (FSH) from the anterior pituitary gland. Thereby, maintains reproductive homeostasis in both males and females. Acts as a more potent suppressor of FSH release than inhibin A. Functions as competitive receptor antagonist binding activin type II receptors with high affinity in the presence of the TGF-beta type III coreceptor/TGFBR3L. In Rattus norvegicus (Rat), this protein is Inhibin beta B chain (Inhbb).